Reading from the N-terminus, the 103-residue chain is Small ribosomal subunit protein uS10 (103 aa).

It belongs to the universal ribosomal protein uS10 family. As to quaternary structure, part of the 30S ribosomal subunit.

Functionally, involved in the binding of tRNA to the ribosomes. This chain is Small ribosomal subunit protein uS10, found in Blochmanniella pennsylvanica (strain BPEN).